The primary structure comprises 1367 residues: Histone acetyltransferase HAC2 (1367 aa).

Positions Thr110 to Ser151 are disordered. A compositionally biased stretch (low complexity) spans Ser111–Ser127. Residues Thr130 to Lys144 show a composition bias toward basic and acidic residues. 12 consecutive repeat copies span residues Lys188 to Lys200, Lys223 to Lys235, Lys251 to Lys263, Lys286 to Lys298, Lys314 to Lys326, Lys349 to Lys361, Lys377 to Lys389, Lys418 to Lys430, Asp432 to Lys444, Lys459 to Lys471, Asp473 to Lys485, and Lys500 to Lys512. The 12 X 13 AA approximate repeats stretch occupies residues Lys188–Lys512. A PHD-type zinc finger spans residues His688 to Glu765. A CBP/p300-type HAT domain is found at Asp780 to Lys1213. Residues Leu903–Ser905, Arg922–Thr923, and Trp978 contribute to the acetyl-CoA site. The segment at Glu1094–Val1157 adopts a ZZ-type 1; degenerate zinc-finger fold. Residues Cys1099, Cys1102, Cys1123, Cys1126, Cys1225, Cys1228, Cys1240, Cys1243, Cys1249, Cys1252, His1261, and His1263 each coordinate Zn(2+). The ZZ-type 2 zinc-finger motif lies at Ser1220–Arg1273. The TAZ-type zinc finger occupies Ala1274–Arg1359.

Rosette leaves, stems and flowers.

Its subcellular location is the nucleus. The enzyme catalyses L-lysyl-[protein] + acetyl-CoA = N(6)-acetyl-L-lysyl-[protein] + CoA + H(+). In terms of biological role, acetyltransferase enzyme. Acetylates histones, giving a specific tag for transcriptional activation. No acetyltransferase activity found in vitro. This is Histone acetyltransferase HAC2 (HAC2) from Arabidopsis thaliana (Mouse-ear cress).